Consider the following 1588-residue polypeptide: Paternally-expressed gene 3 protein (1588 aa).

In terms of domain architecture, SCAN box spans 46–128 (HQRFRNLIYV…TLLENYKEMY (83 aa)). 3 disordered regions span residues 128 to 230 (YQPE…ESYQ), 266 to 306 (DGHS…RRGI), and 319 to 349 (KFIK…MSDD). A compositionally biased stretch (acidic residues) spans 129 to 142 (QPEDDNNSDVTSDD). 4 stretches are compositionally biased toward basic and acidic residues: residues 143 to 152 (DMTRNRRESS), 161 to 182 (SGDR…DRWS), 206 to 225 (FEMD…RSQD), and 295 to 306 (PEAKKSTHRRGI). C2H2-type zinc fingers lie at residues 454–476 (YVCD…QIMH), 507–529 (FECK…RKIH), and 565–587 (YECR…QKIH). Positions 588 to 607 (FGDDKDNEREHERERERGET) are enriched in basic and acidic residues. Positions 588–610 (FGDDKDNEREHERERERGETFRP) are disordered. The C2H2-type 4 zinc finger occupies 627-649 (YECKVCGETFLHSSSLKEHQKIH). Residues 838–930 (LVASKPPRSH…EFSVPSSNVR (93 aa)) are disordered. Basic and acidic residues predominate over residues 868–881 (LNDKRQKIPARENP). Residues 969–991 (YECQECGECFAHSSDLTEHQKIH) form a C2H2-type 5 zinc finger. Residues 1056–1104 (EKSHGEESQGENTDGEETHSEETHGQETIEDPVIQGSDMEDPQKDDPDD) are disordered. Basic and acidic residues predominate over residues 1071 to 1082 (EETHSEETHGQE). C2H2-type zinc fingers lie at residues 1107–1129 (YECE…QKVH), 1163–1185 (YECP…QRIH), 1225–1247 (IRCL…MRLH), 1282–1304 (FECA…VTVH), and 1332–1354 (YECK…KELH). A compositionally biased stretch (acidic residues) spans 1395 to 1415 (AEPEVEAAEPEVEAAEPEVEA). Residues 1395 to 1495 (AEPEVEAAEP…GIEDPEEGED (101 aa)) form a disordered region. 7 consecutive repeat copies span residues 1397 to 1403 (PEVEAAE), 1404 to 1410 (PEVEAAE), 1411 to 1417 (PEVEAAE), 1418 to 1422 (PNGEA), 1425 to 1429 (PDGEA), 1432 to 1436 (PIGEA), and 1439 to 1443 (PNGEA). Residues 1397 to 1417 (PEVEAAEPEVEAAEPEVEAAE) form a 3 X 7 AA repeat of P-E-V-E-A-A-E region. Residues 1418–1443 (PNGEAEGPDGEAAEPIGEAGQPNGEA) form a 4 X 5 AA repeat of P-X-G-E-A region. Acidic residues-rich tracts occupy residues 1449 to 1466 (DADE…ERAE) and 1475 to 1495 (PEGD…EGED). 2 C2H2-type zinc fingers span residues 1505-1527 (YDCH…LKTH) and 1564-1586 (FKCD…QNTH).

The protein belongs to the krueppel C2H2-type zinc-finger protein family. Homodimer. Interacts with SIAH1A and SIAH2. Interacts with TRAF2.

It is found in the nucleus. The protein resides in the cytoplasm. In terms of biological role, induces apoptosis in cooperation with SIAH1A. Acts as a mediator between p53/TP53 and BAX in a neuronal death pathway that is activated by DNA damage. Acts synergistically with TRAF2 and inhibits TNF induced apoptosis through activation of NF-kappa-B. The polypeptide is Paternally-expressed gene 3 protein (PEG3) (Pan troglodytes (Chimpanzee)).